The sequence spans 1377 residues: DNA-directed RNA polymerase subunit beta' (1377 aa).

Zn(2+) contacts are provided by Cys60, Cys62, Cys75, and Cys78. Mg(2+)-binding residues include Asp449, Asp451, and Asp453. Positions 777, 851, 858, and 861 each coordinate Zn(2+).

This sequence belongs to the RNA polymerase beta' chain family. In terms of assembly, the RNAP catalytic core consists of 2 alpha, 1 beta, 1 beta' and 1 omega subunit. When a sigma factor is associated with the core the holoenzyme is formed, which can initiate transcription. Mg(2+) is required as a cofactor. Requires Zn(2+) as cofactor.

The enzyme catalyses RNA(n) + a ribonucleoside 5'-triphosphate = RNA(n+1) + diphosphate. DNA-dependent RNA polymerase catalyzes the transcription of DNA into RNA using the four ribonucleoside triphosphates as substrates. This is DNA-directed RNA polymerase subunit beta' from Borrelia turicatae (strain 91E135).